Here is a 159-residue protein sequence, read N- to C-terminus: MSTYPPPTGEWTTGLCGCFSDCKSCCLSFLCPCIPFGQVAEVLDKGMTSCGLAGLLYCLLLHAGVAVVPCHCIYTCTYRRKLRAAYDLPPEPCADCCVHMWCGPCAISQMYRELKNRGADPAMGRQPAFSLSLTSHCRFFLKSKYYHIIKKNWRTVKYG.

A helical membrane pass occupies residues 52–74 (LAGLLYCLLLHAGVAVVPCHCIY).

This sequence belongs to the cornifelin family. Expressed in roots, coleoptiles, leaves, stalks, apical meristems, immature ears, endosperm, pericarp and tassel spikelets.

Its subcellular location is the membrane. The chain is Cell number regulator 4 (CNR4) from Zea mays (Maize).